The sequence spans 78 residues: Large ribosomal subunit protein bL28 (78 aa).

A disordered region spans residues 1 to 29; sequence MSAHCQVTGRQPSFGKSVSHSHRRTSRRW.

This sequence belongs to the bacterial ribosomal protein bL28 family.

The chain is Large ribosomal subunit protein bL28 from Corynebacterium efficiens (strain DSM 44549 / YS-314 / AJ 12310 / JCM 11189 / NBRC 100395).